The chain runs to 48 residues: Sperm protamine P1 (48 aa).

Belongs to the protamine P1 family. In terms of tissue distribution, testis.

The protein localises to the nucleus. It localises to the chromosome. Functionally, protamines substitute for histones in the chromatin of sperm during the haploid phase of spermatogenesis. They compact sperm DNA into a highly condensed, stable and inactive complex. This chain is Sperm protamine P1 (PRM1), found in Eptesicus fuscus (Big brown bat).